Here is a 234-residue protein sequence, read N- to C-terminus: Sugar fermentation stimulation protein homolog (234 aa).

Belongs to the SfsA family.

The sequence is that of Sugar fermentation stimulation protein homolog from Pectobacterium atrosepticum (strain SCRI 1043 / ATCC BAA-672) (Erwinia carotovora subsp. atroseptica).